Here is a 151-residue protein sequence, read N- to C-terminus: Large ribosomal subunit protein bL9 (151 aa).

The protein belongs to the bacterial ribosomal protein bL9 family.

Functionally, binds to the 23S rRNA. This is Large ribosomal subunit protein bL9 from Mycolicibacterium vanbaalenii (strain DSM 7251 / JCM 13017 / BCRC 16820 / KCTC 9966 / NRRL B-24157 / PYR-1) (Mycobacterium vanbaalenii).